Reading from the N-terminus, the 179-residue chain is Large ribosomal subunit protein uL5 (179 aa).

It belongs to the universal ribosomal protein uL5 family. As to quaternary structure, part of the 50S ribosomal subunit; part of the 5S rRNA/L5/L18/L25 subcomplex. Contacts the 5S rRNA and the P site tRNA. Forms a bridge to the 30S subunit in the 70S ribosome.

Its function is as follows. This is one of the proteins that bind and probably mediate the attachment of the 5S RNA into the large ribosomal subunit, where it forms part of the central protuberance. In the 70S ribosome it contacts protein S13 of the 30S subunit (bridge B1b), connecting the 2 subunits; this bridge is implicated in subunit movement. Contacts the P site tRNA; the 5S rRNA and some of its associated proteins might help stabilize positioning of ribosome-bound tRNAs. In Thioalkalivibrio sulfidiphilus (strain HL-EbGR7), this protein is Large ribosomal subunit protein uL5.